A 109-amino-acid chain; its full sequence is U4-lycotoxin-Ls1a (109 aa).

The first 22 residues, 1-22, serve as a signal peptide directing secretion; the sequence is MKVLVLFSVLFLTLFSYSSTEA. Positions 23-44 are excised as a propeptide; the sequence is IDEFDSDAEEDMLSLMANEQVR. A knottin domain region spans residues 45–88; the sequence is AKACTPRLHDCSHDRHSCCRGELFKDVCYCFYPEGEDKTEVCSC. Intrachain disulfides connect Cys-48/Cys-63, Cys-55/Cys-72, Cys-62/Cys-88, and Cys-74/Cys-86. Residues 89-108 form a linear cationic cytotoxin domain region; it reads QQPKSHKYIEKVVDKAKTVV.

This sequence belongs to the neurotoxin 19 (CSTX) family. 05 (U4-Lctx) subfamily. Expressed by the venom gland.

It localises to the secreted. Enhances the high-affinity desensitization of human P2RX3 purinoceptors. This chain is U4-lycotoxin-Ls1a, found in Lycosa singoriensis (Wolf spider).